The following is a 777-amino-acid chain: MNSERSERIKIPVLPLRDVVVYPHMVIPLFVGRKKSIHCIETSMNNDKKIMLIAQKEASKDEPSTNDLFNIGTISSILQMLKLPDGTVKVLVEGLQRACIKNIESNGEHLVAEVELIISPTVIDKEQEVLIRTTVNQFESYIKLNKKIPSEILNTLSQTKNAEKLADTIAAHMPLKLADKQSVLEIYNVNERLEFLMAIMETEIDLLKVEKRIRNRVKKQMEKSQREYYLNEQIKAIQKELGDMDEIPDENKILKRKIKSLKMPKEAKEKTESELQKLKMMSPMSAEATVVRSYIDWMIQVPWNIKTKIKKDIQEAKKILDIDHFGLEKVKERILEYLAVQSRTNKVKGPILCLIGPPGVGKTSLGKSIAKSTGRKYVRMALGGIRDEAEIRGHRRTYIGSMPGKLMQKMVKAKVKNPLFLLDEIDKMSCDIRVDPASALLEVLDPEQNINFNDHYLEVDYDLSDVMFVATSNSMNIPAPLLDRMEIIRLSGYTENEKLNIAKCYLYPKQMERNALKRNELIITDCAIISIIQYYTREAGVRSLEREISKICRKVVKLLILNKSLKKIEINSKNLKKFLGIKRFDYGKTNNLNQIGQVVGLAWTEVGGELLTIETACVSGKGKLTYTGSLGEVMQESIQAALTVVRSQAKKLGIKKDFHEKHDIHVHVPEGATPKDGPSAGIAMCTAIVSSLTKNPVKSNIAMTGEITLQGRVLTIGGLKEKLLAAHRGGVKTVLIPYENKRNLEEIPKNIIEGLTIYPVKNIEEVLKIALENTPYV.

Residues 11 to 204 (IPVLPLRDVV…FLMAIMETEI (194 aa)) form the Lon N-terminal domain. Position 356-363 (356-363 (GPPGVGKT)) interacts with ATP. In terms of domain architecture, Lon proteolytic spans 592 to 773 (LNQIGQVVGL…EEVLKIALEN (182 aa)). Catalysis depends on residues serine 679 and lysine 722.

The protein belongs to the peptidase S16 family. As to quaternary structure, homohexamer. Organized in a ring with a central cavity.

It is found in the cytoplasm. The catalysed reaction is Hydrolysis of proteins in presence of ATP.. Functionally, ATP-dependent serine protease that mediates the selective degradation of mutant and abnormal proteins as well as certain short-lived regulatory proteins. Required for cellular homeostasis and for survival from DNA damage and developmental changes induced by stress. Degrades polypeptides processively to yield small peptide fragments that are 5 to 10 amino acids long. Binds to DNA in a double-stranded, site-specific manner. This is Lon protease from Buchnera aphidicola subsp. Schizaphis graminum (strain Sg).